Reading from the N-terminus, the 342-residue chain is MKFLDEAKVYIRSGDGGAGCVSFRREKFIEFGGPDGGDGGRGGDVWAECVEGLNTLIDYRYQQHFKAKKGEHGSGRNRAGAKGADVVLKVPAGTEILAEDRETQIADLTQVGQRVLLARGGNGGFGNAYFTTSTNRAPRHANPGQEGREHWLWLRLKLIADAGLVGLPNAGKSTFLATVTAAKPKIADYPFTTLHPGLGVVRVDAREFVLADIPGLIEGAHEGVGLGDRFLAHVERCRVLLHLVDGTSEDAGAAYQLVRTELDAYGHGLAEKPEIVALSKADILDPETLAAQVARLEEAAGRPPLVLSAATRQGVPEALRALMAAMDAASAEEAKPAEAWQP.

An Obg domain is found at 1–159; it reads MKFLDEAKVY…HWLWLRLKLI (159 aa). The region spanning 160-327 is the OBG-type G domain; it reads ADAGLVGLPN…ALRALMAAMD (168 aa). Residues 166–173, 191–195, 212–215, 279–282, and 308–310 contribute to the GTP site; these read GLPNAGKS, FTTLH, DIPG, SKAD, and SAA. Mg(2+) is bound by residues Ser173 and Thr193.

Belongs to the TRAFAC class OBG-HflX-like GTPase superfamily. OBG GTPase family. As to quaternary structure, monomer. Mg(2+) is required as a cofactor.

Its subcellular location is the cytoplasm. In terms of biological role, an essential GTPase which binds GTP, GDP and possibly (p)ppGpp with moderate affinity, with high nucleotide exchange rates and a fairly low GTP hydrolysis rate. Plays a role in control of the cell cycle, stress response, ribosome biogenesis and in those bacteria that undergo differentiation, in morphogenesis control. In Methylobacterium nodulans (strain LMG 21967 / CNCM I-2342 / ORS 2060), this protein is GTPase Obg.